Consider the following 275-residue polypeptide: Dermonecrotic toxin LamSicTox-alphaIV1iii (275 aa).

Residue histidine 5 is part of the active site. Residues glutamate 25 and aspartate 27 each contribute to the Mg(2+) site. Catalysis depends on histidine 41, which acts as the Nucleophile. 2 disulfides stabilise this stretch: cysteine 45–cysteine 51 and cysteine 47–cysteine 192. Aspartate 85 is a binding site for Mg(2+).

This sequence belongs to the arthropod phospholipase D family. Class II subfamily. Requires Mg(2+) as cofactor. As to expression, expressed by the venom gland.

It localises to the secreted. The catalysed reaction is an N-(acyl)-sphingosylphosphocholine = an N-(acyl)-sphingosyl-1,3-cyclic phosphate + choline. It carries out the reaction an N-(acyl)-sphingosylphosphoethanolamine = an N-(acyl)-sphingosyl-1,3-cyclic phosphate + ethanolamine. It catalyses the reaction a 1-acyl-sn-glycero-3-phosphocholine = a 1-acyl-sn-glycero-2,3-cyclic phosphate + choline. The enzyme catalyses a 1-acyl-sn-glycero-3-phosphoethanolamine = a 1-acyl-sn-glycero-2,3-cyclic phosphate + ethanolamine. Its function is as follows. Dermonecrotic toxins cleave the phosphodiester linkage between the phosphate and headgroup of certain phospholipids (sphingolipid and lysolipid substrates), forming an alcohol (often choline) and a cyclic phosphate. This toxin acts on sphingomyelin (SM). It may also act on ceramide phosphoethanolamine (CPE), lysophosphatidylcholine (LPC) and lysophosphatidylethanolamine (LPE), but not on lysophosphatidylserine (LPS), and lysophosphatidylglycerol (LPG). It acts by transphosphatidylation, releasing exclusively cyclic phosphate products as second products. Induces dermonecrosis, hemolysis, increased vascular permeability, edema, inflammatory response, and platelet aggregation. This is Dermonecrotic toxin LamSicTox-alphaIV1iii from Loxosceles amazonica (Recluse spider).